The primary structure comprises 330 residues: Phosphate acyltransferase (330 aa).

This sequence belongs to the PlsX family. As to quaternary structure, homodimer. Probably interacts with PlsY.

It is found in the cytoplasm. It carries out the reaction a fatty acyl-[ACP] + phosphate = an acyl phosphate + holo-[ACP]. It functions in the pathway lipid metabolism; phospholipid metabolism. Its function is as follows. Catalyzes the reversible formation of acyl-phosphate (acyl-PO(4)) from acyl-[acyl-carrier-protein] (acyl-ACP). This enzyme utilizes acyl-ACP as fatty acyl donor, but not acyl-CoA. The protein is Phosphate acyltransferase of Bacillus cereus (strain ATCC 14579 / DSM 31 / CCUG 7414 / JCM 2152 / NBRC 15305 / NCIMB 9373 / NCTC 2599 / NRRL B-3711).